A 91-amino-acid chain; its full sequence is UPF0147 protein APE_2336a (91 aa).

The protein belongs to the UPF0147 family.

The polypeptide is UPF0147 protein APE_2336a (Aeropyrum pernix (strain ATCC 700893 / DSM 11879 / JCM 9820 / NBRC 100138 / K1)).